We begin with the raw amino-acid sequence, 511 residues long: Protoheme IX farnesyltransferase, mitochondrial (511 aa).

The transit peptide at 1–23 directs the protein to the mitochondrion; that stretch reads MSSSTESLPGTLRRTLTTSRAPA. 2 disordered regions span residues 1–27 and 50–136; these read MSSS…ATSS and HDSA…LAPD. Composition is skewed to low complexity over residues 52 to 79, 104 to 115, and 126 to 136; these read SASS…SSTT, RKAAAAAAAAAA, and PDAPTADLAPD. The next 8 membrane-spanning stretches (helical) occupy residues 168–188, 197–217, 253–273, 275–295, 303–323, 344–364, 398–418, and 444–464; these read LTVL…VPSF, SLAP…TTLC, AAVL…YFGV, PTVS…YTPL, TWVG…AAAG, LGGW…FMPL, AFIP…SFAV, and ARGL…LALA.

It belongs to the UbiA prenyltransferase family.

The protein localises to the mitochondrion membrane. Its function is as follows. Converts protoheme IX and farnesyl diphosphate to heme O. This chain is Protoheme IX farnesyltransferase, mitochondrial (pft-1), found in Neurospora crassa (strain ATCC 24698 / 74-OR23-1A / CBS 708.71 / DSM 1257 / FGSC 987).